The primary structure comprises 503 residues: Probable cytosol aminopeptidase (503 aa).

Residues lysine 270 and aspartate 275 each coordinate Mn(2+). Residue lysine 282 is part of the active site. Residues aspartate 293, aspartate 352, and glutamate 354 each contribute to the Mn(2+) site. Residue arginine 356 is part of the active site.

The protein belongs to the peptidase M17 family. The cofactor is Mn(2+).

Its subcellular location is the cytoplasm. The enzyme catalyses Release of an N-terminal amino acid, Xaa-|-Yaa-, in which Xaa is preferably Leu, but may be other amino acids including Pro although not Arg or Lys, and Yaa may be Pro. Amino acid amides and methyl esters are also readily hydrolyzed, but rates on arylamides are exceedingly low.. The catalysed reaction is Release of an N-terminal amino acid, preferentially leucine, but not glutamic or aspartic acids.. Presumably involved in the processing and regular turnover of intracellular proteins. Catalyzes the removal of unsubstituted N-terminal amino acids from various peptides. In Klebsiella pneumoniae subsp. pneumoniae (strain ATCC 700721 / MGH 78578), this protein is Probable cytosol aminopeptidase.